The sequence spans 225 residues: MNGIRDVVREEQPRERLLLEGAGSLSNRELLAVLLRTGSKEETVLKLSDKILHQFDGLRMLKDATLEELISIHGIGISKASQLMAAFELGRRMVRLEYQNRYSIRSPEDCAKYMMEEMRFLQQEHFVCLYLNTKNQVIHRQTIFIGSLNTSIVHPREVFKEAFRRAAASIICLHNHPSGDPTPSREDIAVTKRLVECGQIIGIEVLDHIIIGDHKFVSLKEKGHI.

In terms of domain architecture, MPN spans 103 to 225 (SIRSPEDCAK…FVSLKEKGHI (123 aa)). Residues His-174, His-176, and Asp-187 each coordinate Zn(2+). The JAMM motif motif lies at 174-187 (HNHPSGDPTPSRED).

Belongs to the UPF0758 family.

This is UPF0758 protein BCB4264_A4572 from Bacillus cereus (strain B4264).